Reading from the N-terminus, the 464-residue chain is UDP-N-acetylmuramoylalanine--D-glutamate ligase (464 aa).

An ATP-binding site is contributed by 112-118; the sequence is GTDGKTT.

Belongs to the MurCDEF family.

The protein localises to the cytoplasm. The enzyme catalyses UDP-N-acetyl-alpha-D-muramoyl-L-alanine + D-glutamate + ATP = UDP-N-acetyl-alpha-D-muramoyl-L-alanyl-D-glutamate + ADP + phosphate + H(+). It functions in the pathway cell wall biogenesis; peptidoglycan biosynthesis. Cell wall formation. Catalyzes the addition of glutamate to the nucleotide precursor UDP-N-acetylmuramoyl-L-alanine (UMA). The protein is UDP-N-acetylmuramoylalanine--D-glutamate ligase of Chlorobium phaeobacteroides (strain DSM 266 / SMG 266 / 2430).